The chain runs to 186 residues: Peptidyl-tRNA hydrolase (186 aa).

Tyrosine 14 lines the tRNA pocket. Catalysis depends on histidine 19, which acts as the Proton acceptor. TRNA contacts are provided by tyrosine 64, asparagine 66, and asparagine 112.

Belongs to the PTH family. Monomer.

It localises to the cytoplasm. It catalyses the reaction an N-acyl-L-alpha-aminoacyl-tRNA + H2O = an N-acyl-L-amino acid + a tRNA + H(+). Functionally, hydrolyzes ribosome-free peptidyl-tRNAs (with 1 or more amino acids incorporated), which drop off the ribosome during protein synthesis, or as a result of ribosome stalling. In terms of biological role, catalyzes the release of premature peptidyl moieties from peptidyl-tRNA molecules trapped in stalled 50S ribosomal subunits, and thus maintains levels of free tRNAs and 50S ribosomes. This Bacillus cytotoxicus (strain DSM 22905 / CIP 110041 / 391-98 / NVH 391-98) protein is Peptidyl-tRNA hydrolase.